The primary structure comprises 304 residues: Nucleotide-binding protein RHA1_ro07174 (304 aa).

24-31 (GLSGAGLQ) contacts ATP. 75–78 (DVRS) is a binding site for GTP.

It belongs to the RapZ-like family.

In terms of biological role, displays ATPase and GTPase activities. This is Nucleotide-binding protein RHA1_ro07174 from Rhodococcus jostii (strain RHA1).